The sequence spans 263 residues: 2-keto-4-pentenoate hydratase 1 (263 aa).

This sequence belongs to the hydratase/decarboxylase family. MhpD subfamily. A divalent metal cation is required as a cofactor.

The catalysed reaction is (S)-4-hydroxy-2-oxopentanoate = (2Z)-2-hydroxypenta-2,4-dienoate + H2O. The protein operates within aromatic compound metabolism; 3-phenylpropanoate degradation. In terms of biological role, catalyzes the conversion of 2-hydroxypentadienoic acid (enolic form of 2-oxopent-4-enoate) to 4-hydroxy-2-ketopentanoic acid. In Dechloromonas aromatica (strain RCB), this protein is 2-keto-4-pentenoate hydratase 1.